Here is a 2377-residue protein sequence, read N- to C-terminus: Serine/threonine-protein kinase WNK1 (2377 aa).

Disordered regions lie at residues 1–79 (MSDG…RFFR) and 93–203 (LPGL…QQDD). Phosphothreonine is present on residues Thr-17 and Thr-58. A compositionally biased stretch (basic and acidic residues) spans 48-64 (RTEEYRRRRHTMDKDSR). Composition is skewed to low complexity over residues 101–111 (PQPSVPAVVPQ) and 127–141 (VASQ…AASP). Positions 149-158 (SATTTVPSST) are enriched in polar residues. Phosphoserine is present on residues Ser-165 and Ser-172. A Protein kinase domain is found at 221–479 (LKFDIEIGRG…IKDLLNHAFF (259 aa)). An ATP-binding site is contributed by Ser-231. The chloride site is built by Phe-283 and Leu-299. ATP-binding positions include 301-304 (TELM) and Lys-351. Asp-368 (proton acceptor) is an active-site residue. The chloride site is built by Leu-369 and Leu-371. A phosphoserine; by autocatalysis mark is found at Ser-378 and Ser-382. Residues 488 to 555 (ELAEEDDGEK…VCEGDHKTMA (68 aa)) form an autoinhibitory domain region. Residues 573-588 (QLVREEQEKRKQEESS) show a composition bias toward basic and acidic residues. 2 disordered regions span residues 573–782 (QLVR…SAGT) and 1013–1114 (PAVS…SRPK). Polar residues-rich tracts occupy residues 593–628 (NEQQ…STQV), 638–705 (HQQL…QSQP), and 713–733 (SMAQ…VLSS). Residues 629 to 639 (EPEEPEADQHQ) form an interaction with KLHL3 region. Positions 734–746 (QPIQHPQQQGIQP) are enriched in low complexity. Residues 747 to 782 (TVPSQQAVQYSLPQAASSSEGTTAQPVSQPQVSAGT) show a composition bias toward polar residues. Positions 1018 to 1028 (TQQPPTTSSQQ) are enriched in low complexity. A compositionally biased stretch (polar residues) spans 1029-1038 (AVLESTQGVS). The segment covering 1042–1058 (PPEQTPITQSQPTQPVP) has biased composition (low complexity). Over residues 1075-1085 (SDGNENAPSSS) the composition is skewed to polar residues. The span at 1093-1114 (TKRHYRKSVRSRSRHEKTSRPK) shows a compositional bias: basic residues. The short motif at 1252 to 1255 (RFIV) is the RFXV motif 1 element. Ser-1256 is subject to Phosphoserine. 2 disordered regions span residues 1726–1760 (GQVS…TVVP) and 1818–1847 (TMSS…SSGA). Residues 1738–1748 (PVGTATGVKPG) show a composition bias toward low complexity. A Phosphothreonine modification is found at Thr-1843. The RFXV motif 2 signature appears at 1854-1857 (RFQV). Positions 1860–1945 (TMDDAQKERK…TKVGRFQVTT (86 aa)) are disordered. Over residues 1863-1879 (DAQKERKNRSEDTKSVH) the composition is skewed to basic and acidic residues. The span at 1882-1900 (SSTSESSVLSSSSPESTLV) shows a compositional bias: low complexity. Short sequence motifs (RFXV motif) lie at residues 1940 to 1943 (RFQV) and 1952 to 1955 (RFSV). A compositionally biased stretch (basic and acidic residues) spans 1959-1969 (EDKVTELKKEG). 5 disordered regions span residues 1959–1984 (EDKV…QTVI), 1989–2008 (PKKE…PSSD), 2015–2064 (SRGT…DIED), 2107–2191 (VIIP…NLYS), and 2203–2239 (SLSA…SRKG). Position 1973 is a phosphoserine (Ser-1973). The segment covering 1989-1998 (PKKEKPELAE) has biased composition (basic and acidic residues). Phosphoserine is present on residues Ser-2006, Ser-2007, Ser-2022, Ser-2024, and Ser-2027. A compositionally biased stretch (low complexity) spans 2035–2057 (SLPVQNLSQSLSNSFNSSYMSSD). Ser-2116 carries the post-translational modification Phosphoserine. Residues 2117-2129 (GRRRRPTKSKGSK) are compositionally biased toward basic residues. Over residues 2130–2140 (SSRSSSLGNKS) the composition is skewed to low complexity. Residues 2141–2191 (PQLSGNLSGQSGTSVLHPQQTLHPAGNTPETGHNQLLQPLKPSPSSDNLYS) are compositionally biased toward polar residues. Residues 2208–2232 (GQGTSSTNTVGGTVSSQAAQAQPPA) are compositionally biased toward low complexity. Positions 2236-2256 (SRKGTFTDDLHKLVDNWARDA) are amphipathic alpha-helix. Phosphoserine occurs at positions 2265 and 2281. Residues 2325–2344 (PAPFGTQWSGTGGPAPQPLG) are disordered. Phosphoserine occurs at positions 2365 and 2367.

It belongs to the protein kinase superfamily. Ser/Thr protein kinase family. WNK subfamily. Interacts with WNK3. Interacts with WNK4; inhibiting the activity of WNK4. Interacts with SGK1; promoting its activation. Associates with the mTORC2 complex. Interacts with UVRAG. As to quaternary structure, interacts with isoform 1; inhibiting isoform 1 activity. It depends on Mg(2+) as a cofactor. Autophosphorylated at Ser-378 and Ser-382, promoting its activity. Autophosphorylation at Ser-382 is inhibited by intracellular calcium. Phosphorylation at Thr-58 increases ability to activate SGK1. In terms of processing, ubiquitinated by the BCR(KLHL3) complex, leading to its degradation. Also ubiquitinated by the BCR(KLHL2) complex. Post-translationally, may be O-glycosylated. As to expression, widely expressed in both adult and embryonic tissue, with highest levels observed in the testis and lower levels in heart, lung, kidney, placenta, brain and skeletal muscle. Expressed in pancreatic duct. Two isoforms are expressed in heart, a single shorter isoform in the kidney. Locates to the distal convoluted tubule, the medullary collecting duct and the cortical collecting duct of the kidney. In terms of tissue distribution, restricted to the nervous system, expressed preferentially in sensory neurons than in motor neurons and in general more abundant in axons than in cell bodies (at protein level). In the DRG, predominantly expressed in the satellite cells that envelop sensory neurons, but low expression also observed in the cell bodies of neurons (at protein level). In the sciatic nerve, expressed in the Schwann cells that surround axons and in a mosaic distribution of axons (at protein level). In the spinal cord, expressed in superficial layers (LI and LII), as well as in the fibers of the Lissauer tract (at protein level). Also detected in the axon fibers of dorsolateral funiculus and lateral funiculus (at protein level).

Its subcellular location is the cytoplasm. The protein resides in the nucleus. It localises to the cytoskeleton. It is found in the spindle. It carries out the reaction L-seryl-[protein] + ATP = O-phospho-L-seryl-[protein] + ADP + H(+). The catalysed reaction is L-threonyl-[protein] + ATP = O-phospho-L-threonyl-[protein] + ADP + H(+). Activated in response to hyperosmotic stress: cell shrinkage promotes formation of a membraneless compartment that concentrates WNK1 with its substrates, OXSR1/OSR1 and STK39/SPAK. Activation requires autophosphorylation of Ser-382 and, to a lower extent, Ser-378. Autophosphorylation and subsequent activation is inhibited by increases in intracellular ionic strength: Cl(-) potently inhibits WNK1 kinase activity via direct binding. Also inhibited by K(+) ions. Functionally, serine/threonine-protein kinase component of the WNK1-SPAK/OSR1 kinase cascade, which acts as a key regulator of blood pressure and regulatory volume increase by promoting ion influx. WNK1 mediates regulatory volume increase in response to hyperosmotic stress by acting as a molecular crowding sensor, which senses cell shrinkage and mediates formation of a membraneless compartment by undergoing liquid-liquid phase separation. The membraneless compartment concentrates WNK1 with its substrates, OXSR1/OSR1 and STK39/SPAK, promoting WNK1-dependent phosphorylation and activation of downstream kinases OXSR1/OSR1 and STK39/SPAK. Following activation, OXSR1/OSR1 and STK39/SPAK catalyze phosphorylation of ion cotransporters SLC12A1/NKCC2, SLC12A2/NKCC1, SLC12A5/KCC2 and SLC12A6/KCC3, regulating their activity. Phosphorylation of Na-K-Cl cotransporters SLC12A2/NKCC1 and SLC12A2/NKCC1 promote their activation and ion influx; simultaneously, phosphorylation of K-Cl cotransporters SLC12A5/KCC2 and SLC12A6/KCC3 inhibit their activity, blocking ion efflux. Also acts as a regulator of angiogenesis in endothelial cells. Also acts independently of the WNK1-SPAK/OSR1 kinase cascade by catalyzing phosphorylation of other substrates, such as SYT2, PCF11 and NEDD4L. Mediates phosphorylation of SYT2, regulating SYT2 association with phospholipids and membrane-binding. Regulates mRNA export in the nucleus by mediating phosphorylation of PCF11, thereby decreasing the association between PCF11 and POLR2A/RNA polymerase II and promoting mRNA export to the cytoplasm. Acts as a negative regulator of autophagy. Required for the abscission step during mitosis, independently of the WNK1-SPAK/OSR1 kinase cascade. WNK1 may also play a role in actin cytoskeletal reorganization. Also acts as a scaffold protein independently of its protein kinase activity: negatively regulates cell membrane localization of various transporters and channels, such as SLC4A4, SLC26A6, SLC26A9, TRPV4 and CFTR. Involved in the regulation of epithelial Na(+) channel (ENaC) by promoting activation of SGK1 in a kinase-independent manner: probably acts as a scaffold protein that promotes the recruitment of SGK1 to the mTORC2 complex in response to chloride, leading to mTORC2-dependent phosphorylation and activation of SGK1. Acts as an assembly factor for the ER membrane protein complex independently of its protein kinase activity: associates with EMC2 in the cytoplasm via its amphipathic alpha-helix, and prevents EMC2 ubiquitination and subsequent degradation, thereby promoting EMC2 stabilization. Its function is as follows. Kinase-defective isoform specifically expressed in kidney, which acts as a dominant-negative regulator of the longer isoform 1. Does not directly inhibit WNK4 and has no direct effect on sodium and chloride ion transport. Down-regulates sodium-chloride cotransporter activity indirectly by inhibiting isoform 1, it associates with isoform 1 and attenuates its kinase activity. In kidney, may play an important role regulating sodium and potassium balance. The chain is Serine/threonine-protein kinase WNK1 from Mus musculus (Mouse).